The following is a 464-amino-acid chain: tRNA-2-methylthio-N(6)-dimethylallyladenosine synthase (464 aa).

Positions methionine 1–proline 25 are disordered. The region spanning arginine 27–glycine 142 is the MTTase N-terminal domain. [4Fe-4S] cluster-binding residues include cysteine 36, cysteine 72, cysteine 105, cysteine 180, cysteine 184, and cysteine 187. Residues alanine 166–glutamate 398 enclose the Radical SAM core domain. The 64-residue stretch at alanine 401–alanine 464 folds into the TRAM domain.

The protein belongs to the methylthiotransferase family. MiaB subfamily. In terms of assembly, monomer. It depends on [4Fe-4S] cluster as a cofactor.

It localises to the cytoplasm. It carries out the reaction N(6)-dimethylallyladenosine(37) in tRNA + (sulfur carrier)-SH + AH2 + 2 S-adenosyl-L-methionine = 2-methylsulfanyl-N(6)-dimethylallyladenosine(37) in tRNA + (sulfur carrier)-H + 5'-deoxyadenosine + L-methionine + A + S-adenosyl-L-homocysteine + 2 H(+). Catalyzes the methylthiolation of N6-(dimethylallyl)adenosine (i(6)A), leading to the formation of 2-methylthio-N6-(dimethylallyl)adenosine (ms(2)i(6)A) at position 37 in tRNAs that read codons beginning with uridine. In Anaeromyxobacter dehalogenans (strain 2CP-C), this protein is tRNA-2-methylthio-N(6)-dimethylallyladenosine synthase.